The chain runs to 246 residues: Major pollen allergen Cyn d 1 (246 aa).

N-linked (GlcNAc...) asparagine glycosylation occurs at asparagine 9. An Expansin-like EG45 domain is found at 39–145; it reads GGACGYKDVD…RRVKCKYPSG (107 aa). Residues 159–240 enclose the Expansin-like CBD domain; sequence HYLALLVKYA…NWKPDTVYTS (82 aa).

It belongs to the expansin family. Expansin B subfamily.

The protein resides in the secreted. The polypeptide is Major pollen allergen Cyn d 1 (CYND1) (Cynodon dactylon (Bermuda grass)).